Here is a 703-residue protein sequence, read N- to C-terminus: Epidermal growth factor receptor (703 aa).

Positions 1-30 (MGVRSPLSASGPRGAAVLVLLLLGVALCSA) are cleaved as a signal peptide. Over 31–654 (VEEKKVCQGT…GCPNGSKTPS (624 aa)) the chain is Extracellular. The cysteines at positions 37 and 64 are disulfide-linked. Residues N134, N190, and N200 are each glycosylated (N-linked (GlcNAc...) asparagine). Intrachain disulfides connect C164–C194, C197–C206, C201–C214, C222–C230, C226–C238, C239–C247, C243–C255, C258–C267, C271–C298, C302–C314, C318–C333, C336–C340, and C344–C369. Residues N359, N368, and N420 are each glycosylated (N-linked (GlcNAc...) asparagine). Cystine bridges form between C477–C506, C513–C522, C517–C530, C533–C542, C546–C562, C565–C581, C569–C589, C592–C601, C605–C627, C630–C638, and C634–C646. 2 N-linked (GlcNAc...) asparagine glycosylation sites follow: N573 and N578. N-linked (GlcNAc...) asparagine glycans are attached at residues N613 and N633. An N-linked (GlcNAc...) asparagine glycan is attached at N648. A helical membrane pass occupies residues 655–667 (IAAGVVGGLLCLV). Residues 668–703 (VVGLGIGLYLRRRHIVRKRTLRRLLQERELVEPLTP) are Cytoplasmic-facing. T687 and T702 each carry phosphothreonine.

Belongs to the protein kinase superfamily. Tyr protein kinase family. EGF receptor subfamily. Binding of the ligand triggers homo- and/or heterodimerization of the receptor triggering its autophosphorylation. Phosphorylated. Autophosphorylates.

The protein localises to the cell membrane. The protein resides in the endoplasmic reticulum membrane. It is found in the golgi apparatus membrane. Its subcellular location is the nucleus membrane. It localises to the endosome. The protein localises to the endosome membrane. The protein resides in the nucleus. It catalyses the reaction L-tyrosyl-[protein] + ATP = O-phospho-L-tyrosyl-[protein] + ADP + H(+). Endocytosis and inhibition of the activated EGFR by phosphatases constitute immediate regulatory mechanisms. Moreover, inducible feedback inhibitors may constitute alternative regulatory mechanisms for the EGFR signaling. Receptor tyrosine kinase binding ligands of the EGF family and activating several signaling cascades to convert extracellular cues into appropriate cellular responses. Known ligands include EGF and TGFA/TGF-alpha. Ligand binding triggers receptor homo- and/or heterodimerization and autophosphorylation on key cytoplasmic residues. The phosphorylated receptor recruits adapter proteins like GRB2 which in turn activates complex downstream signaling cascades. Activates at least 4 major downstream signaling cascades including the RAS-RAF-MEK-ERK, PI3 kinase-AKT, PLCgamma-PKC and STATs modules. May also activate the NF-kappa-B signaling cascade. The chain is Epidermal growth factor receptor (EGFR) from Gallus gallus (Chicken).